Here is a 222-residue protein sequence, read N- to C-terminus: Cytidylate kinase (222 aa).

7-15 (GPSASGKST) serves as a coordination point for ATP.

The protein belongs to the cytidylate kinase family. Type 1 subfamily.

Its subcellular location is the cytoplasm. It carries out the reaction CMP + ATP = CDP + ADP. The enzyme catalyses dCMP + ATP = dCDP + ADP. This Aquifex aeolicus (strain VF5) protein is Cytidylate kinase.